Reading from the N-terminus, the 323-residue chain is MADIDKLNIDSIIQRLLEVRGSKPGKNVQLQENEIRGLCLKSREIFLSQPILLELEAPLKICGDIHGQYYDLLRLFEYGGFPPESNYLFLGDYVDRGKQSLETICLLLAYKIKYPENFFLLRGNHECASINRIYGFYDECKRRYNIKLWKTFTDCFNCLPIAAIVDEKIFCCHGGLSPDLQSMEQIRRIMRPTDVPDQGLLCDLLWSDPDKDVLGWGENDRGVSFTFGAEVVAKFLHKHDLDLICRAHQVVEDGYEFFAKRQLVTLFSAPNYCGEFDNAGAMMSVDETLMCSFQILKPAEKKKPNATRPVTPPRGMITKQAKK.

Ala2 bears the N-acetylalanine mark. Residues Asp64, His66, Asp92, and Asn124 each coordinate Mn(2+). The Proton donor role is filled by His125. Mn(2+)-binding residues include His173 and His248. Residues 302 to 323 (KKPNATRPVTPPRGMITKQAKK) form a disordered region. Residues Thr307 and Thr311 each carry the phosphothreonine modification.

This sequence belongs to the PPP phosphatase family. PP-1 subfamily. PP1 comprises a catalytic subunit, PPP1CA, PPP1CB or PPP1CC, which is folded into its native form by inhibitor 2 and glycogen synthetase kinase 3, and then complexed to one or several targeting or regulatory subunits. PPP1R12A, PPP1R12B and PPP1R12C mediate binding to myosin. PPP1R3A (in skeletal muscle), PPP1R3B (in sliver), PPP1R3C, PPP1R3D and PPP1R3F (in brain) mediate binding to glycogen. PPP1R15A and PPP1R15B mediate binding to EIF2S1. Part of a complex containing PPP1R15B, PP1 and NCK1/2. Interacts with PPP1R3B, PPP1R7 and CDCA2. Isoform 2 interacts with SPZ1. Interacts with IKFZ1; the interaction targets PPP1CC to pericentromeric heterochromatin, dephosphorylates IKAROS, stabilizes it and prevents it from degradation. Interacts with NOM1 and PPP1R8. Component of the PTW/PP1 phosphatase complex, composed of PPP1R10/PNUTS, TOX4, WDR82, and PPP1CA or PPP1CB or PPP1CC. Interacts with PPP1R8. Interacts with NEK2. Interacts with URI1; the interaction is phosphorylation-dependent and occurs in a growth factor-dependent manner. Interacts with FOXP3. Interacts with TMEM225 (via RVxF motif). Interacts with MKI67. Interacts with RRP1B; this targets PPP1CC to the nucleolus. Found in a complex with PPP1CA, PPP1CC, SHC1 and PEAK1. Interacts with DYNLT4. Interacts (via RVxF motif) with FIRRM; regulates PLK1 kinase activity. Interacts with the KNL1 complex subunit KNL1; the interaction is direct and mutually exclusive with KNL1 binding to microtubules. Component of the SHOC2-MRAS-PP1c (SMP) complex consisting of SHOC2, GTP-bound M-Ras/MRAS and the catalytic subunit of protein phosphatase 1 (either PPP1CA, PPP1CB or PPP1CC). SHOC2 and PP1c preferably bind M-Ras/MRAS, but they also bind K-Ras/KRAS, N-Ras/NRAS and H-Ras/HRAS; these interactions are GTP-dependent and both SHOC2 and PP1c are required to form a stable complex. Interacts with SHOC2 in the absence of Ras GTPases. The cofactor is Mn(2+). Phosphorylated by NEK2. In terms of tissue distribution, isoform 2 is expressed only in testis, in the late spermatocytes and early spematids (at protein level).

It localises to the cytoplasm. The protein resides in the nucleus. The protein localises to the cleavage furrow. It is found in the nucleolus. Its subcellular location is the nucleoplasm. It localises to the chromosome. The protein resides in the centromere. The protein localises to the kinetochore. It is found in the nucleus speckle. Its subcellular location is the midbody. It localises to the mitochondrion. The protein resides in the cytoskeleton. The protein localises to the microtubule organizing center. The catalysed reaction is O-phospho-L-seryl-[protein] + H2O = L-seryl-[protein] + phosphate. It catalyses the reaction O-phospho-L-threonyl-[protein] + H2O = L-threonyl-[protein] + phosphate. Inactivated by binding to URI1. Protein phosphatase that associates with over 200 regulatory proteins to form highly specific holoenzymes which dephosphorylate hundreds of biological targets. Protein phosphatase 1 (PP1) is essential for cell division, and participates in the regulation of glycogen metabolism, muscle contractility and protein synthesis. Dephosphorylates RPS6KB1. Involved in regulation of ionic conductances and long-term synaptic plasticity. May play an important role in dephosphorylating substrates such as the postsynaptic density-associated Ca(2+)/calmodulin dependent protein kinase II. Component of the PTW/PP1 phosphatase complex, which plays a role in the control of chromatin structure and cell cycle progression during the transition from mitosis into interphase. In balance with CSNK1D and CSNK1E, determines the circadian period length, through the regulation of the speed and rhythmicity of PER1 and PER2 phosphorylation. May dephosphorylate CSNK1D and CSNK1E. Regulates the recruitment of the SKA complex to kinetochores. Core component of the SHOC2-MRAS-PP1c (SMP) holophosphatase complex that regulates the MAPK pathway activation. Dephosphorylates MKI67 at the onset of anaphase. The SMP complex specifically dephosphorylates the inhibitory phosphorylation at 'Ser-259' of RAF1 kinase, 'Ser-365' of BRAF kinase and 'Ser-214' of ARAF kinase, stimulating their kinase activities. The SMP complex enhances the dephosphorylation activity and substrate specificity of PP1c. Its function is as follows. Required for normal male fertility. This chain is Serine/threonine-protein phosphatase PP1-gamma catalytic subunit (Ppp1cc), found in Rattus norvegicus (Rat).